A 132-amino-acid chain; its full sequence is Protein NrdI (132 aa).

This sequence belongs to the NrdI family.

In terms of biological role, probably involved in ribonucleotide reductase function. This is Protein NrdI from Agrobacterium fabrum (strain C58 / ATCC 33970) (Agrobacterium tumefaciens (strain C58)).